The primary structure comprises 451 residues: Methylenetetrahydrofolate--tRNA-(uracil-5-)-methyltransferase TrmFO (451 aa).

18 to 23 (GGGLAG) contacts FAD.

Belongs to the MnmG family. TrmFO subfamily. Requires FAD as cofactor.

The protein resides in the cytoplasm. It carries out the reaction uridine(54) in tRNA + (6R)-5,10-methylene-5,6,7,8-tetrahydrofolate + NADH + H(+) = 5-methyluridine(54) in tRNA + (6S)-5,6,7,8-tetrahydrofolate + NAD(+). The enzyme catalyses uridine(54) in tRNA + (6R)-5,10-methylene-5,6,7,8-tetrahydrofolate + NADPH + H(+) = 5-methyluridine(54) in tRNA + (6S)-5,6,7,8-tetrahydrofolate + NADP(+). Its function is as follows. Catalyzes the folate-dependent formation of 5-methyl-uridine at position 54 (M-5-U54) in all tRNAs. The protein is Methylenetetrahydrofolate--tRNA-(uracil-5-)-methyltransferase TrmFO of Synechococcus sp. (strain JA-3-3Ab) (Cyanobacteria bacterium Yellowstone A-Prime).